Consider the following 1216-residue polypeptide: Regulator of telomere elongation helicase 1 (1216 aa).

Residues 7–295 (KGVTVDFPFQ…TKVAQQAELH (289 aa)) form the Helicase ATP-binding domain. An ATP-binding site is contributed by 42-49 (SPTGTGKT). Cys-144, Cys-162, Cys-171, and Cys-206 together coordinate [4Fe-4S] cluster. The Nuclear localization signal motif lies at 150 to 166 (KKQESNHMQVHLCRRKV). The DEAH box signature appears at 249-252 (DEAH). The short motif at 874 to 880 (QRGRRRK) is the Nuclear localization signal element. 2 disordered regions span residues 978–1018 (GCSS…ATRQ) and 1140–1172 (GPGT…RKTQ). Positions 1172–1179 (QSKISSFL) match the PIP-box motif.

This sequence belongs to the helicase family. RAD3/XPD subfamily. In terms of assembly, interacts with TERF1. Interacts (via PIP-box) with PCNA; the interaction is direct and essential for suppressing telomere fragility. Interacts with MMS19; the interaction mediates the association of RTEL1 with the cytosolic iron-sulfur protein assembly (CIA) complex. Highly expressed in adult testis, liver and ovary.

The protein resides in the nucleus. It catalyses the reaction ATP + H2O = ADP + phosphate + H(+). A probable ATP-dependent DNA helicase implicated in telomere-length regulation, DNA repair and the maintenance of genomic stability. Acts as an anti-recombinase to counteract toxic recombination and limit crossover during meiosis. Regulates meiotic recombination and crossover homeostasis by physically dissociating strand invasion events and thereby promotes noncrossover repair by meiotic synthesis dependent strand annealing (SDSA) as well as disassembly of D loop recombination intermediates. Also disassembles T loops and prevents telomere fragility by counteracting telomeric G4-DNA structures, which together ensure the dynamics and stability of the telomere. In Bos taurus (Bovine), this protein is Regulator of telomere elongation helicase 1.